A 404-amino-acid chain; its full sequence is Probable tRNA sulfurtransferase (404 aa).

Positions 60-165 constitute a THUMP domain; that stretch reads QPIVEALKLV…DEAAYISYEE (106 aa). ATP-binding positions include 183 to 184, 208 to 209, Arg-265, Gly-287, and Gln-296; these read ML and HF.

This sequence belongs to the ThiI family.

The protein resides in the cytoplasm. It carries out the reaction [ThiI sulfur-carrier protein]-S-sulfanyl-L-cysteine + a uridine in tRNA + 2 reduced [2Fe-2S]-[ferredoxin] + ATP + H(+) = [ThiI sulfur-carrier protein]-L-cysteine + a 4-thiouridine in tRNA + 2 oxidized [2Fe-2S]-[ferredoxin] + AMP + diphosphate. The catalysed reaction is [ThiS sulfur-carrier protein]-C-terminal Gly-Gly-AMP + S-sulfanyl-L-cysteinyl-[cysteine desulfurase] + AH2 = [ThiS sulfur-carrier protein]-C-terminal-Gly-aminoethanethioate + L-cysteinyl-[cysteine desulfurase] + A + AMP + 2 H(+). It functions in the pathway cofactor biosynthesis; thiamine diphosphate biosynthesis. Catalyzes the ATP-dependent transfer of a sulfur to tRNA to produce 4-thiouridine in position 8 of tRNAs, which functions as a near-UV photosensor. Also catalyzes the transfer of sulfur to the sulfur carrier protein ThiS, forming ThiS-thiocarboxylate. This is a step in the synthesis of thiazole, in the thiamine biosynthesis pathway. The sulfur is donated as persulfide by IscS. This is Probable tRNA sulfurtransferase from Streptococcus pyogenes serotype M4 (strain MGAS10750).